Reading from the N-terminus, the 89-residue chain is Small ribosomal subunit protein bS20 (89 aa).

A compositionally biased stretch (basic residues) spans 1–10; the sequence is MKNRSAIKRH. Residues 1–30 form a disordered region; that stretch reads MKNRSAIKRHNQSEVRRMRNRSAKSEVRTT. The span at 11 to 30 shows a compositional bias: basic and acidic residues; it reads NQSEVRRMRNRSAKSEVRTT.

Belongs to the bacterial ribosomal protein bS20 family.

In terms of biological role, binds directly to 16S ribosomal RNA. This is Small ribosomal subunit protein bS20 from Treponema denticola (strain ATCC 35405 / DSM 14222 / CIP 103919 / JCM 8153 / KCTC 15104).